The following is a 180-amino-acid chain: Endoribonuclease YbeY (180 aa).

Positions 118, 122, and 128 each coordinate Zn(2+).

The protein belongs to the endoribonuclease YbeY family. The cofactor is Zn(2+).

It is found in the cytoplasm. Functionally, single strand-specific metallo-endoribonuclease involved in late-stage 70S ribosome quality control and in maturation of the 3' terminus of the 16S rRNA. This is Endoribonuclease YbeY from Rhodococcus opacus (strain B4).